Reading from the N-terminus, the 568-residue chain is Phosphoprotein (568 aa).

The tract at residues 1-24 (MDQDAFFFERDPEAEGEAPRKQES) is disordered. Residues 7-24 (FFERDPEAEGEAPRKQES) show a composition bias toward basic and acidic residues. An N0 binding region spans residues 33 to 41 (DVVLSYKPT). The segment at 45-324 (EDRSWLHNII…SNEEGTSNTS (280 aa)) is disordered. Composition is skewed to basic and acidic residues over residues 56–105 (NPKE…HARI), 129–144 (GDER…PNER), and 151–167 (PTDE…KREE). A compositionally biased stretch (polar residues) spans 179–216 (GSTSLSDDGEGRTNNNGRSMETSSTHSTRITDVITNPS). Positions 239-253 (TRSERTQNSELHKST) are enriched in basic and acidic residues. Over residues 295-304 (TTNNANNNAK) the composition is skewed to low complexity. The interval 344 to 411 (FELSRRASHQ…SSRDLHKRFS (68 aa)) is multimerization. Residues 387 to 416 (EENRTLLKQIQEEIDSSRDLHKRFSEYQKE) adopt a coiled-coil conformation. The segment at 412–445 (EYQKEQNSLMMANLSTLHIITDRGGKTGDPSDTT) is l protein binding. Disordered stretches follow at residues 434 to 455 (RGGK…TKGK) and 493 to 513 (PVLE…LIPS). Residues 441–450 (PSDTTRSPSV) show a composition bias toward polar residues. The interval 479 to 568 (DLIREDELRE…FEEDIDSLTN (90 aa)) is interaction with the nucleocapsid (N-RNA).

The protein belongs to the respirovirus P protein family. In terms of assembly, homotetramer. Interacts (via multimerization domain) with polymerase L; this interaction forms the polymerase complex. Interacts (via N-terminus) with N0; this interaction allows P to chaperon N0 before encapsidation and form the N-P complex. Interacts (via C-terminus) with N-RNA template; this interaction positions the polymerase on the template.

Essential cofactor of the RNA polymerase L that plays a central role in the transcription and replication by forming the polymerase complex with RNA polymerase L and recruiting L to the genomic N-RNA template for RNA synthesis. Also plays a central role in the encapsidation of nascent RNA chains by forming the encapsidation complex with the nucleocapsid protein N (N-P complex). Acts as a chaperone for newly synthesized free N protein, so-called N0, allowing encapsidation of nascent RNA chains during replication. The nucleoprotein protein N prevents excessive phosphorylation of P, which leads to down-regulation of viral transcription/ replication. Participates, together with N, in the formation of viral factories (viroplasms), which are large inclusions in the host cytoplasm where replication takes place. Recruits host PI4KB and remodel the host endoplasmic reticulum membrane to form viral replication factories. The chain is Phosphoprotein (P/C) from Homo sapiens (Human).